The sequence spans 959 residues: UPF0182 protein MAE_41360 (959 aa).

The next 9 membrane-spanning stretches (helical) occupy residues 13 to 33 (PILLFLGCLVIGQLGVLVVAN), 50 to 70 (LSWQLGLGWGSAILSLLFIFT), 99 to 119 (LLGLLIIATGIGAWIGSMLLY), 156 to 176 (DISSNLWQGLIIAFLVLGLLI), 184 to 204 (IISIVFTVMLSFIIAGQWANF), 239 to 259 (LWLTGVGIYTLFAVILTYLFS), 276 to 296 (LRHLYALWSGLMGLLVLHHII), 319 to 339 (VGQFIEIILGIIAGITSIWLG), and 362 to 382 (FFPYLVPVFLYLIVWISGTII).

Belongs to the UPF0182 family.

It localises to the cell membrane. The sequence is that of UPF0182 protein MAE_41360 from Microcystis aeruginosa (strain NIES-843 / IAM M-2473).